The following is a 742-amino-acid chain: Polyphosphate kinase (742 aa).

N91 lines the ATP pocket. 2 residues coordinate Mg(2+): R431 and R461. H491 serves as the catalytic Phosphohistidine intermediate. Y524, R624, and H652 together coordinate ATP. The segment at W718–P742 is disordered. Basic and acidic residues predominate over residues H726–P742.

It belongs to the polyphosphate kinase 1 (PPK1) family. Requires Mg(2+) as cofactor. In terms of processing, an intermediate of this reaction is the autophosphorylated ppk in which a phosphate is covalently linked to a histidine residue through a N-P bond.

The catalysed reaction is [phosphate](n) + ATP = [phosphate](n+1) + ADP. Its function is as follows. Catalyzes the reversible transfer of the terminal phosphate of ATP to form a long-chain polyphosphate (polyP). This chain is Polyphosphate kinase, found in Mycobacterium bovis (strain ATCC BAA-935 / AF2122/97).